The chain runs to 236 residues: Sorulation-regulated protein 2 (236 aa).

The signal sequence occupies residues 1-20 (MLGLYLSSLFFAFFMAQVFA). 4 N-linked (GlcNAc...) asparagine glycosylation sites follow: Asn-155, Asn-160, Asn-203, and Asn-212. A lipid anchor (GPI-anchor amidated asparagine) is attached at Asn-212. The propeptide at 213-236 (SSSSLMPSMGILSFLFGLYLLLHP) is removed in mature form.

The GPI-anchor is attached to the protein in the endoplasmic reticulum and serves to target the protein to the cell surface. There, the glucosamine-inositol phospholipid moiety is cleaved off and the GPI-modified mannoprotein is covalently attached via its lipidless GPI glycan remnant to the 1,6-beta-glucan of the outer cell wall layer. In terms of processing, N-glycosylated.

Its subcellular location is the spore wall. It localises to the secreted. It is found in the cell wall. The protein localises to the membrane. In Saccharomyces cerevisiae (strain ATCC 204508 / S288c) (Baker's yeast), this protein is Sorulation-regulated protein 2.